The chain runs to 463 residues: Interferon-inducible GTPase 5 (463 aa).

The region spanning 52 to 234 (TRLEVGVTGE…PMLVTTWEHD (183 aa)) is the IRG-type G domain. Residues 61 to 68 (ESGAGKSS), 86 to 90 (TGVVE), 168 to 170 (KVD), and 215 to 217 (SNL) contribute to the GTP site. Ser-246 and Ser-303 each carry phosphoserine. Positions 409–438 (QGEVSLEAAGDNAVEKRSSGEGTSEEAPLS) are disordered.

This sequence belongs to the TRAFAC class dynamin-like GTPase superfamily. IRG family.

The protein resides in the cell projection. Its subcellular location is the cilium. It localises to the flagellum. It is found in the lipid droplet. It catalyses the reaction GTP + H2O = GDP + phosphate + H(+). Its function is as follows. Required for sperm motility and therefore male fertility, via positive regulation of spermatozoa fibrous sheath formation. This chain is Interferon-inducible GTPase 5 (Irgc), found in Rattus norvegicus (Rat).